A 202-amino-acid chain; its full sequence is Recombination protein RecR (202 aa).

The C4-type zinc finger occupies 56–71 (CRVCGNLDSADPCSVC). The region spanning 79-179 (GLICVVESVG…SVTRLAQGIP (101 aa)) is the Toprim domain.

It belongs to the RecR family.

Functionally, may play a role in DNA repair. It seems to be involved in an RecBC-independent recombinational process of DNA repair. It may act with RecF and RecO. The chain is Recombination protein RecR from Granulibacter bethesdensis (strain ATCC BAA-1260 / CGDNIH1).